A 590-amino-acid polypeptide reads, in one-letter code: Conglutin beta 4 (590 aa).

A signal peptide spans 1-30 (MIKMRVRFPTLVLLLGIVFLMAVSIGIAYG). Over residues 38–105 (HERPQEREQE…REPRREREQE (68 aa)) the composition is skewed to basic and acidic residues. The interval 38 to 175 (HERPQEREQE…DSRRQRNPYY (138 aa)) is disordered. The span at 137–146 (QGSSSSSRRQ) shows a compositional bias: low complexity. One can recognise a Cupin type-1 1 domain in the interval 174-332 (YYFSSERFQT…TFNTRYEEIQ (159 aa)). Asn239 is a glycosylation site (N-linked (GlcNAc...) asparagine). Disordered regions lie at residues 340–362 (DEQE…GVIV) and 374–396 (KYAQ…LRSN). The span at 346-362 (EQRHGQEQSHQDEGVIV) shows a compositional bias: basic and acidic residues. Residues 391–548 (FNLRSNKPIY…TFPGSTEDVE (158 aa)) form the Cupin type-1 2 domain. Asn498 carries N-linked (GlcNAc...) asparagine glycosylation. The disordered stretch occupies residues 559–579 (FANAQPQQQQQREREGRRGRR).

Belongs to the 7S seed storage protein family. As to quaternary structure, component of globulins complexes which accumulate in seeds.

Seed storage protein. Accumulates during seed development and is hydrolyzed after germination to provide a carbon and nitrogen source for the developing seedling. In Lupinus angustifolius (Narrow-leaved blue lupine), this protein is Conglutin beta 4.